Consider the following 357-residue polypeptide: uncharacterized protein (357 aa).

The segment at 120-145 is disordered; the sequence is SSSTVNHDQPAEQPSDKSTDDSTGYP.

This is an uncharacterized protein from Caenorhabditis elegans.